We begin with the raw amino-acid sequence, 85 residues long: Progonadoliberin-2 (85 aa).

The first 23 residues, 1–23 (MCASRLVLLLGLLLCVGAHLSSG), serve as a signal peptide directing secretion. Position 24 is a pyrrolidone carboxylic acid (Gln24). Gly33 is subject to Glycine amide.

It belongs to the GnRH family. Midbrain tegmentum.

Its subcellular location is the secreted. Functionally, stimulates the secretion of gonadotropins. The polypeptide is Progonadoliberin-2 (gnrh2) (Verasper moseri (Barfin flounder)).